Here is a 473-residue protein sequence, read N- to C-terminus: Ion-translocating oxidoreductase complex subunit C (473 aa).

4Fe-4S ferredoxin-type domains follow at residues 328 to 357 and 368 to 396; these read KNESISEKTCIRCGYCSYVCPVNLLPQQLY and TKKHYVLDCIECKACEKVCPSYIPLVKYF. Residues Cys-337, Cys-340, Cys-343, Cys-347, Cys-376, Cys-379, Cys-382, and Cys-386 each coordinate [4Fe-4S] cluster.

This sequence belongs to the 4Fe4S bacterial-type ferredoxin family. RnfC subfamily. The complex is composed of six subunits: RnfA, RnfB, RnfC, RnfD, RnfE and RnfG. Requires [4Fe-4S] cluster as cofactor.

It is found in the cell inner membrane. Part of a membrane-bound complex that couples electron transfer with translocation of ions across the membrane. The sequence is that of Ion-translocating oxidoreductase complex subunit C from Buchnera aphidicola subsp. Acyrthosiphon pisum (strain APS) (Acyrthosiphon pisum symbiotic bacterium).